The primary structure comprises 322 residues: Aldo-keto reductase family 1 member C13 (322 aa).

Residues 20–24 and aspartate 50 contribute to the NAD(+) site; that span reads GFGTY. The Proton donor role is filled by tyrosine 55. Histidine 117 serves as a coordination point for substrate. Residues 166 to 167, glutamine 190, 216 to 224, and 270 to 280 each bind NAD(+); these read SN, FGALGTQRY, and QSFYESEMKEN.

Belongs to the aldo/keto reductase family. In terms of assembly, monomer. The N-terminus is blocked.

The enzyme catalyses morphine + NAD(+) = morphinone + NADH + H(+). It carries out the reaction morphine + NADP(+) = morphinone + NADPH + H(+). Strongly inhibited by sulfhydryl reagents and ketamine, but not by pyrazole, barbital and indomethacine. Catalyzes the dehydrogenation of morphine to morphinone. The enzyme also exhibits significant activity for a variety of cyclic and alicyclic alcohols. In addition to xenobiotics, the enzyme catalyzes the dehydrogenation of 17-beta-hydroxysteroids with much higher affinities than morphine. Uses both NAD and NADP, but the activity is much greater with NAD than with NADP. This chain is Aldo-keto reductase family 1 member C13 (AKR1C13), found in Mesocricetus auratus (Golden hamster).